A 957-amino-acid polypeptide reads, in one-letter code: Glycine dehydrogenase (decarboxylating) 2 (957 aa).

At Lys707 the chain carries N6-(pyridoxal phosphate)lysine.

Belongs to the GcvP family. The glycine cleavage system is composed of four proteins: P, T, L and H. It depends on pyridoxal 5'-phosphate as a cofactor.

It catalyses the reaction N(6)-[(R)-lipoyl]-L-lysyl-[glycine-cleavage complex H protein] + glycine + H(+) = N(6)-[(R)-S(8)-aminomethyldihydrolipoyl]-L-lysyl-[glycine-cleavage complex H protein] + CO2. Its function is as follows. The glycine cleavage system catalyzes the degradation of glycine. The P protein binds the alpha-amino group of glycine through its pyridoxal phosphate cofactor; CO(2) is released and the remaining methylamine moiety is then transferred to the lipoamide cofactor of the H protein. The protein is Glycine dehydrogenase (decarboxylating) 2 of Pseudomonas fluorescens (strain Pf0-1).